A 446-amino-acid chain; its full sequence is Glucosylglycerate hydrolase (446 aa).

Residues tyrosine 36, 40-43 (WSWD), tyrosine 88, glutamine 115, and glycine 180 contribute to the substrate site. Residue aspartate 182 is the Proton donor of the active site. Substrate contacts are provided by residues arginine 216 and 375-376 (YW). The active-site Proton acceptor is the glutamate 419. A substrate-binding site is contributed by glutamine 434.

The protein belongs to the glycosyl hydrolase 63 family. Homotetramer. Dimer of dimers.

It carries out the reaction (2R)-2-O-(alpha-D-glucopyranosyl)-glycerate + H2O = (R)-glycerate + D-glucose. With respect to regulation, activity is not dependent on divalent cations, but it is enhanced by Mg(2+). Functionally, catalyzes the hydrolysis of glucosylglycerate (GG) to glycerate and glucose. Involved in recovery from nitrogen starvation by promoting the rapid mobilization of the glucosylglycerate that accumulates under these conditions. Can also hydrolyze mannosylglycerate (MG), with tenfold lower efficiency. In Mycolicibacterium hassiacum (strain DSM 44199 / CIP 105218 / JCM 12690 / 3849) (Mycobacterium hassiacum), this protein is Glucosylglycerate hydrolase.